Here is a 426-residue protein sequence, read N- to C-terminus: Probable serine/threonine-protein kinase PBL2 (426 aa).

The segment at 1 to 54 is disordered; that stretch reads MGNCLDSSAKVDNSNHSPHANSASSGSKVSSKTSRSTGPSGLSTTSYSTDSSFG. Gly2 carries the N-myristoyl glycine lipid modification. Cys4 carries the S-palmitoyl cysteine lipid modification. Low complexity predominate over residues 14-38; the sequence is SNHSPHANSASSGSKVSSKTSRSTG. A compositionally biased stretch (polar residues) spans 39–52; it reads PSGLSTTSYSTDSS. Thr75 bears the Phosphothreonine mark. In terms of domain architecture, Protein kinase spans 86-369; sequence FRQDNLLGEG…SEVLVTLEQL (284 aa). ATP is bound by residues 92 to 100 and Lys124; that span reads LGEGGFGCV. Phosphotyrosine is present on Tyr169. Asp219 acts as the Proton acceptor in catalysis. The residue at position 253 (Ser253) is an O-UMP-serine. Ser253 is modified (phosphoserine). Phosphothreonine occurs at positions 254 and 259. An O-UMP-threonine modification is found at Thr254. Phosphotyrosine is present on Tyr267. The interval 374–426 is disordered; the sequence is KPGTKHTQMESPRFHHSSVMQKSPVRYSHDRPLLHMTPGASPLPSYTQSPRVR. Residues 417–426 are compositionally biased toward polar residues; it reads PSYTQSPRVR.

It belongs to the protein kinase superfamily. Ser/Thr protein kinase family. Interacts with FLS2. Interacts with the Xanthomonas campestris effector XopAC/AvrAC; the recognition of X.campestris effector XopAC/AvrAC requires the presence of RKS1 and RPP13L4/ZAR1. Component of a stable high-order oligomeric complex made of RKS1 and RPP13L4/ZAR1 which recruits X.campestris effector XopAC/AvrAC-mediated uridylylated PBL2 in the presence of ATP to form a wheel-like pentameric resistosome; this complex triggers immunity toward X.campestris in vascular tissues. Binds to RKS1 when uridylylated. In terms of processing, uridylylated at Ser-253 and Thr-254 by Xanthomonas campestris effector AvrAC/XopAC; this uridylylation is necessary for specific recruitment to RKS1 and to trigger immunity. As to expression, strongly expressed in leaves, moderately in roots, and barely in flowers, mostly in pedicels.

It localises to the cell membrane. The protein resides in the nucleus. It catalyses the reaction L-seryl-[protein] + ATP = O-phospho-L-seryl-[protein] + ADP + H(+). It carries out the reaction L-threonyl-[protein] + ATP = O-phospho-L-threonyl-[protein] + ADP + H(+). In terms of biological role, involved in disease resistance signaling. Contributes to pathogen-associated molecular pattern (PAMP)-triggered immunity (PTI) signaling and defense responses downstream of FLS2. Acts as a BIK1 decoy and enables Xanthomonas campestris AvrAC/XopAC detection; X.campestris effector AvrAC/XopAC-mediated uridylylation promotes the formation of a complex with RKS1 and RPP13L4/ZAR1 which, in turn, activates effector-triggered immunity (ETI) against X.campestris. Promotes, when uridylylated by AvrAC/XopAC, the release of ADP from the inactive RKS1-ZAR1 complex, thus activating the resistosome. This Arabidopsis thaliana (Mouse-ear cress) protein is Probable serine/threonine-protein kinase PBL2.